The primary structure comprises 755 residues: Kojibiose phosphorylase (755 aa).

333 to 334 (WD) contributes to the substrate binding site. The Proton donor role is filled by E473. 573-574 (KQ) is a binding site for substrate.

The protein belongs to the glycosyl hydrolase 65 family.

The enzyme catalyses kojibiose + phosphate = beta-D-glucose 1-phosphate + D-glucose. Functionally, in vitro catalyzes the phosphorolysis of D-kojibiose into beta-D-glucose 1-phosphate and D-glucose. No other disaccharides tested substitute for D-kojibiose. In the reverse direction disaccharides can be formed from beta-D-glucose 1-phosphate plus D-glucose, L-sorbose, D-sorbitol, L-iditol or 1,5-anhydro-D-glucitol, but with low efficiency. The beta-D-glucose 1-phosphate product is the substrate for YcjU (AC P77366), the next apparent enzyme in the putative biochemical pathway encoded in this locus (yjcM to ycjW). This chain is Kojibiose phosphorylase (ycjT), found in Escherichia coli (strain K12).